The sequence spans 154 residues: Transcriptional repressor NrdR (154 aa).

A zinc finger lies at 3–34; sequence CPFCNAPDTKVIDSRLATEGAQVRRRRECMSC. Positions 49-139 constitute an ATP-cone domain; that stretch reads PRVIKSDGNR…VYRSFQDVNA (91 aa).

Belongs to the NrdR family. Zn(2+) serves as cofactor.

In terms of biological role, negatively regulates transcription of bacterial ribonucleotide reductase nrd genes and operons by binding to NrdR-boxes. The protein is Transcriptional repressor NrdR of Hydrogenovibrio crunogenus (strain DSM 25203 / XCL-2) (Thiomicrospira crunogena).